Consider the following 917-residue polypeptide: Hexokinase-2 (917 aa).

The residue at position 1 (methionine 1) is an N-acetylmethionine. The segment at 1–16 (MIASHLLAYFFTELNH) is mitochondrial-binding peptide (MBP). Hexokinase domains are found at residues 16 to 458 (HDQV…MVTA) and 464 to 906 (ADQH…LITA). ATP contacts are provided by residues arginine 30 and 84-89 (DLGGTN). Positions 73 to 207 (DGTEHGEFLA…DFDIDIVAVV (135 aa)) are hexokinase small subdomain 1. Position 84-88 (84-88 (DLGGT)) interacts with D-glucose 6-phosphate. Residues 155–156 (SF), 172–173 (TK), and 208–209 (ND) contribute to the D-glucose site. The interval 208 to 447 (NDTVGTMMTC…CDVRFLRSED (240 aa)) is hexokinase large subdomain 1. Aspartate 209 and threonine 232 together coordinate D-glucose 6-phosphate. Residues asparagine 235, glutamate 260, and 291–294 (QLFE) contribute to the D-glucose site. 413–415 (DGS) is a binding site for D-glucose 6-phosphate. Position 425 to 426 (425 to 426 (KR)) interacts with ATP. Residues serine 449 and 532-536 (DLGGT) contribute to the D-glucose 6-phosphate site. A hexokinase small subdomain 2 region spans residues 521-655 (DGTEKGDFLA…EFDLDVVAVV (135 aa)). Position 532-537 (532-537 (DLGGTN)) interacts with ATP. D-glucose contacts are provided by residues 603–604 (SF), 620–621 (TK), and 656–657 (ND). The interval 656-895 (NDTVGTMMTC…CDVSFLQSED (240 aa)) is hexokinase large subdomain 2. D-glucose 6-phosphate is bound by residues aspartate 657 and threonine 680. Threonine 680 provides a ligand contact to ATP. Residues 682-683 (SN), glutamate 708, and 739-742 (QRFE) each bind D-glucose. Residues 747-748 (GM), 784-788 (TKFLS), and 863-867 (TLYKL) contribute to the ATP site. Residues 861–863 (DGT) and serine 897 contribute to the D-glucose 6-phosphate site.

It belongs to the hexokinase family. As to quaternary structure, monomer. Interacts with TIGAR; the interaction increases hexokinase activity in a hypoxia- and HIF1A-dependent manner. In terms of tissue distribution, predominant hexokinase isozyme expressed in insulin-responsive tissues such as skeletal muscle.

Its subcellular location is the mitochondrion outer membrane. The protein resides in the cytoplasm. It localises to the cytosol. It catalyses the reaction a D-hexose + ATP = a D-hexose 6-phosphate + ADP + H(+). The catalysed reaction is D-fructose + ATP = D-fructose 6-phosphate + ADP + H(+). It carries out the reaction D-glucose + ATP = D-glucose 6-phosphate + ADP + H(+). Its pathway is carbohydrate metabolism; hexose metabolism. The protein operates within carbohydrate degradation; glycolysis; D-glyceraldehyde 3-phosphate and glycerone phosphate from D-glucose: step 1/4. With respect to regulation, hexokinase activity is specifically inhibited by 2,6-disubstituted glucosamines. Its function is as follows. Catalyzes the phosphorylation of hexose, such as D-glucose and D-fructose, to hexose 6-phosphate (D-glucose 6-phosphate and D-fructose 6-phosphate, respectively). Mediates the initial step of glycolysis by catalyzing phosphorylation of D-glucose to D-glucose 6-phosphate. Plays a key role in maintaining the integrity of the outer mitochondrial membrane by preventing the release of apoptogenic molecules from the intermembrane space and subsequent apoptosis. In Homo sapiens (Human), this protein is Hexokinase-2.